A 1096-amino-acid polypeptide reads, in one-letter code: Lysine-specific demethylase PHF2 (1096 aa).

The PHD-type zinc finger occupies Pro-5 to Thr-56. 2-oxoglutarate contacts are provided by Thr-193 and Thr-246. The JmjC domain occupies Phe-197–Arg-353. His-249 and Asp-251 together coordinate Fe cation. Residues Tyr-259, Lys-266, Tyr-321, and Thr-323 each contribute to the 2-oxoglutarate site. Tyr-321 contributes to the Fe cation binding site. 2 disordered regions span residues Lys-447–Lys-634 and Gly-646–Arg-674. Ser-474 carries the phosphoserine modification. Thr-479 is modified (phosphothreonine). Residues Ser-503–Pro-518 are compositionally biased toward pro residues. Residue Ser-539 is modified to Phosphoserine. 2 stretches are compositionally biased toward basic and acidic residues: residues Leu-548 to Lys-563 and Asp-578 to Lys-624. Ser-655 carries the post-translational modification Phosphoserine. A compositionally biased stretch (basic and acidic residues) spans Phe-665–Arg-674. Phosphoserine is present on residues Ser-681 and Ser-705. Lys-711 participates in a covalent cross-link: Glycyl lysine isopeptide (Lys-Gly) (interchain with G-Cter in SUMO2). 3 disordered regions span residues Thr-719–Leu-799, Ala-817–Leu-846, and Tyr-877–Ala-1078. Lys-720 carries the post-translational modification N6-acetyllysine. Tyr-728 is subject to Phosphotyrosine. Residues Lys-729–Ser-757 are compositionally biased toward basic and acidic residues. Phosphoserine occurs at positions 730, 733, 734, and 738. Ser-879, Ser-882, and Ser-899 each carry phosphoserine. Over residues Arg-916–Thr-925 the composition is skewed to basic and acidic residues. The segment covering Ser-949 to Leu-959 has biased composition (basic residues). Composition is skewed to low complexity over residues Thr-960–Ser-1009 and Thr-1027–Thr-1040. Positions Arg-1053–Ala-1065 are enriched in polar residues. Ser-1056 bears the Phosphoserine; by PKA mark.

It belongs to the JHDM1 histone demethylase family. JHDM1D subfamily. Component of the PHF2-ARID5B complex, at least composed of PHF2 and ARID5B. Interacts with HNF4A and NR1H4. Interacts with RELA. In terms of processing, phosphorylated by PKA on specific serine residues, leading to the formation of an active lysine demethylase complex. In terms of tissue distribution, widely expressed, including in liver (at protein level).

The protein localises to the nucleus. It is found in the nucleolus. The protein resides in the chromosome. Its subcellular location is the centromere. It localises to the kinetochore. The catalysed reaction is N(6),N(6)-dimethyl-L-lysyl(9)-[histone H3] + 2-oxoglutarate + O2 = N(6)-methyl-L-lysyl(9)-[histone H3] + formaldehyde + succinate + CO2. Enzymatically inactive by itself, and become active following phosphorylation by PKA. Functionally, lysine demethylase that demethylates both histones and non-histone proteins. Enzymatically inactive by itself, and becomes active following phosphorylation by PKA: forms a complex with ARID5B and mediates demethylation of methylated ARID5B. Demethylation of ARID5B leads to target the PHF2-ARID5B complex to target promoters, where PHF2 mediates demethylation of dimethylated 'Lys-9' of histone H3 (H3K9me2), followed by transcription activation of target genes. The PHF2-ARID5B complex acts as a coactivator of HNF4A in liver. PHF2 is recruited to trimethylated 'Lys-4' of histone H3 (H3K4me3) at rDNA promoters and promotes expression of rDNA. Involved in the activation of toll-like receptor 4 (TLR4)-target inflammatory genes in macrophages by catalyzing the demethylation of trimethylated histone H4 lysine 20 (H4K20me3) at the gene promoters. The chain is Lysine-specific demethylase PHF2 from Homo sapiens (Human).